The chain runs to 152 residues: Cell division protein SepF (152 aa).

The span at 23 to 32 (EVAREPEPMQ) shows a compositional bias: basic and acidic residues. The disordered stretch occupies residues 23-42 (EVAREPEPMQKKTKKEKPSK).

The protein belongs to the SepF family. Homodimer. Interacts with FtsZ.

It localises to the cytoplasm. Its function is as follows. Cell division protein that is part of the divisome complex and is recruited early to the Z-ring. Probably stimulates Z-ring formation, perhaps through the cross-linking of FtsZ protofilaments. Its function overlaps with FtsA. The chain is Cell division protein SepF from Listeria welshimeri serovar 6b (strain ATCC 35897 / DSM 20650 / CCUG 15529 / CIP 8149 / NCTC 11857 / SLCC 5334 / V8).